The primary structure comprises 455 residues: Bifunctional protein GlmU (455 aa).

The segment at 1-227 is pyrophosphorylase; that stretch reads MLTDIVILAA…ATEALGVNDP (227 aa). UDP-N-acetyl-alpha-D-glucosamine is bound by residues 8–11, lysine 22, glutamine 73, 78–79, 100–102, glycine 137, glutamate 152, asparagine 167, and asparagine 225; these read LAAG, GT, and YGD. Residue aspartate 102 participates in Mg(2+) binding. Asparagine 225 is a binding site for Mg(2+). Positions 228–248 are linker; sequence VQLAILERVFQRQQLRALQMQ. The segment at 249-455 is N-acetyltransferase; it reads GLRVADPARV…HWQRPRRDKK (207 aa). UDP-N-acetyl-alpha-D-glucosamine-binding residues include arginine 331 and lysine 349. Histidine 361 serves as the catalytic Proton acceptor. The UDP-N-acetyl-alpha-D-glucosamine site is built by tyrosine 364 and asparagine 375. Acetyl-CoA-binding positions include alanine 378, 384–385, serine 403, alanine 421, and arginine 438; that span reads NY. A disordered region spans residues 420–455; the sequence is GAGSTITKEVPPGGLTLSRSPQRTIPHWQRPRRDKK.

In the N-terminal section; belongs to the N-acetylglucosamine-1-phosphate uridyltransferase family. It in the C-terminal section; belongs to the transferase hexapeptide repeat family. Homotrimer. Mg(2+) serves as cofactor.

The protein resides in the cytoplasm. It catalyses the reaction alpha-D-glucosamine 1-phosphate + acetyl-CoA = N-acetyl-alpha-D-glucosamine 1-phosphate + CoA + H(+). It carries out the reaction N-acetyl-alpha-D-glucosamine 1-phosphate + UTP + H(+) = UDP-N-acetyl-alpha-D-glucosamine + diphosphate. It functions in the pathway nucleotide-sugar biosynthesis; UDP-N-acetyl-alpha-D-glucosamine biosynthesis; N-acetyl-alpha-D-glucosamine 1-phosphate from alpha-D-glucosamine 6-phosphate (route II): step 2/2. The protein operates within nucleotide-sugar biosynthesis; UDP-N-acetyl-alpha-D-glucosamine biosynthesis; UDP-N-acetyl-alpha-D-glucosamine from N-acetyl-alpha-D-glucosamine 1-phosphate: step 1/1. It participates in bacterial outer membrane biogenesis; LPS lipid A biosynthesis. Catalyzes the last two sequential reactions in the de novo biosynthetic pathway for UDP-N-acetylglucosamine (UDP-GlcNAc). The C-terminal domain catalyzes the transfer of acetyl group from acetyl coenzyme A to glucosamine-1-phosphate (GlcN-1-P) to produce N-acetylglucosamine-1-phosphate (GlcNAc-1-P), which is converted into UDP-GlcNAc by the transfer of uridine 5-monophosphate (from uridine 5-triphosphate), a reaction catalyzed by the N-terminal domain. The protein is Bifunctional protein GlmU of Acidithiobacillus ferrooxidans (strain ATCC 23270 / DSM 14882 / CIP 104768 / NCIMB 8455) (Ferrobacillus ferrooxidans (strain ATCC 23270)).